The primary structure comprises 561 residues: Arginine--tRNA ligase (561 aa).

Residues 129–139 (ANPTGPLHVGH) carry the 'HIGH' region motif.

The protein belongs to the class-I aminoacyl-tRNA synthetase family. Monomer.

It localises to the cytoplasm. The enzyme catalyses tRNA(Arg) + L-arginine + ATP = L-arginyl-tRNA(Arg) + AMP + diphosphate. This Bordetella parapertussis (strain 12822 / ATCC BAA-587 / NCTC 13253) protein is Arginine--tRNA ligase.